A 189-amino-acid chain; its full sequence is UPF0301 protein PA14_05290 (189 aa).

It belongs to the UPF0301 (AlgH) family.

This is UPF0301 protein PA14_05290 from Pseudomonas aeruginosa (strain UCBPP-PA14).